The primary structure comprises 233 residues: Small ribosomal subunit protein uS3 (233 aa).

Residues 39–107 form the KH type-2 domain; sequence VREFLKAKLK…PVHVNIEEVR (69 aa). Positions 209-233 are disordered; it reads PGQVSAEPTQPEKKMRKGGRNAAAN.

It belongs to the universal ribosomal protein uS3 family. Part of the 30S ribosomal subunit. Forms a tight complex with proteins S10 and S14.

Its function is as follows. Binds the lower part of the 30S subunit head. Binds mRNA in the 70S ribosome, positioning it for translation. This chain is Small ribosomal subunit protein uS3, found in Laribacter hongkongensis (strain HLHK9).